Reading from the N-terminus, the 328-residue chain is Malate dehydrogenase (328 aa).

11–17 (GAAGQIG) lines the NAD(+) pocket. Residues Arg-94 and Arg-100 each contribute to the substrate site. NAD(+) is bound by residues Asn-107, Gln-114, and 131–133 (VGN). Asn-133 and Arg-164 together coordinate substrate. His-189 functions as the Proton acceptor in the catalytic mechanism.

This sequence belongs to the LDH/MDH superfamily. MDH type 2 family.

The catalysed reaction is (S)-malate + NAD(+) = oxaloacetate + NADH + H(+). Its function is as follows. Catalyzes the reversible oxidation of malate to oxaloacetate. This is Malate dehydrogenase from Stenotrophomonas maltophilia (strain R551-3).